Here is a 634-residue protein sequence, read N- to C-terminus: MAMWNRPCQRLPQQPLVAEPTAEGEPHLPTGRELTEANRFAYAALCGISLSQLFPEPEHSSFCTEFMAGLVQWLELSEAVLPTMTAFASGLGGEGADVFVQILLKDPILKDDPTVITQDLLSFSLKDGHYDARARVLVCHMTSLLQVPLEELDVLEEMFLESLKEIKEEESEMAEASRKKKENRRKWKRYLLIGLATVGGGTVIGVTGGLAAPLVAAGAATIIGSAGAAALGSAAGIAIMTSLFGAAGAGLTGYKMKKRVGAIEEFTFLPLTEGRQLHITIAVTGWLASGKYRTFSAPWAALAHSREQYCLAWEAKYLMELGNALETILSGLANMVAQEALKYTVLSGIVAALTWPASLLSVANVIDNPWGVCLHRSAEVGKHLAHILLSRQQGRRPVTLIGFSLGARVIYFCLQEMAQEKDCQGIIEDVILLGAPVEGEAKHWEPFRKVVSGRIINGYCRGDWLLSFVYRTSSVQLRVAGLQPVLLQDRRVENVDLTSVVSGHLDYAKQMDAILKAVGIRTKPGWDEKGLLLAPGCLPSEEPRQAAAAASSGETPHQVGQTQGPISGDTSKLAMSTDPSQAQVPVGLDQSEGASLPAAASPERPPICSHGMDPNPLGCPDCACKTQGPSTGLD.

Residues 150-190 are a coiled coil; the sequence is EELDVLEEMFLESLKEIKEEESEMAEASRKKKENRRKWKRY. 3 consecutive transmembrane segments (helical) span residues 203-223, 231-251, and 346-366; these read VIGV…ATII, LGSA…GAGL, and LSGI…ANVI. Positions 542–612 are disordered; that stretch reads EPRQAAAAAS…ERPPICSHGM (71 aa). Residues 552 to 583 are compositionally biased toward polar residues; sequence SGETPHQVGQTQGPISGDTSKLAMSTDPSQAQ.

It belongs to the TMCO4 family.

It is found in the membrane. This Homo sapiens (Human) protein is Transmembrane and coiled-coil domain-containing protein 4 (TMCO4).